Consider the following 248-residue polypeptide: tRNA pseudouridine synthase A (248 aa).

Catalysis depends on aspartate 53, which acts as the Nucleophile. Residue tyrosine 111 coordinates substrate.

The protein belongs to the tRNA pseudouridine synthase TruA family. In terms of assembly, homodimer.

It carries out the reaction uridine(38/39/40) in tRNA = pseudouridine(38/39/40) in tRNA. Functionally, formation of pseudouridine at positions 38, 39 and 40 in the anticodon stem and loop of transfer RNAs. The chain is tRNA pseudouridine synthase A from Listeria innocua serovar 6a (strain ATCC BAA-680 / CLIP 11262).